The sequence spans 178 residues: Transcription termination/antitermination protein NusG (178 aa).

The region spanning 126–156 (VGQQVRVNEGPFADFNGVVEEVNYERNKLRV) is the KOW domain.

The protein belongs to the NusG family.

Its function is as follows. Participates in transcription elongation, termination and antitermination. The sequence is that of Transcription termination/antitermination protein NusG from Neisseria meningitidis serogroup B (strain ATCC BAA-335 / MC58).